The chain runs to 383 residues: S-adenosylmethionine:tRNA ribosyltransferase-isomerase (383 aa).

The protein belongs to the QueA family. In terms of assembly, monomer.

Its subcellular location is the cytoplasm. The enzyme catalyses 7-aminomethyl-7-carbaguanosine(34) in tRNA + S-adenosyl-L-methionine = epoxyqueuosine(34) in tRNA + adenine + L-methionine + 2 H(+). It functions in the pathway tRNA modification; tRNA-queuosine biosynthesis. Functionally, transfers and isomerizes the ribose moiety from AdoMet to the 7-aminomethyl group of 7-deazaguanine (preQ1-tRNA) to give epoxyqueuosine (oQ-tRNA). This Rickettsia prowazekii (strain Madrid E) protein is S-adenosylmethionine:tRNA ribosyltransferase-isomerase.